Reading from the N-terminus, the 359-residue chain is Serpentine receptor class epsilon-26 (359 aa).

A run of 7 helical transmembrane segments spans residues 29 to 49, 66 to 86, 127 to 147, 172 to 192, 195 to 215, 256 to 276, and 282 to 302; these read CAIS…VFVS, IGVP…ITIL, VAGF…LAIV, FIII…FNIL, YVLN…YYYI, LVFV…ALVL, and FFMH…FLVV.

Belongs to the nematode receptor-like protein sre family.

It is found in the membrane. This is Serpentine receptor class epsilon-26 (sre-26) from Caenorhabditis elegans.